The chain runs to 107 residues: Iron-sulfur cluster assembly protein CyaY (107 aa).

It belongs to the frataxin family.

In terms of biological role, involved in iron-sulfur (Fe-S) cluster assembly. May act as a regulator of Fe-S biogenesis. The chain is Iron-sulfur cluster assembly protein CyaY from Yersinia intermedia.